A 349-amino-acid polypeptide reads, in one-letter code: N-acetyltaurine hydrolase (349 aa).

His-26, His-28, Glu-169, His-201, His-230, and Asp-298 together coordinate a divalent metal cation.

It belongs to the metallo-dependent hydrolases superfamily. Phosphotriesterase family. A divalent metal cation is required as a cofactor.

It localises to the cytoplasm. It is found in the cytosol. The enzyme catalyses N-acetyltaurine + H2O = taurine + acetate. The catalysed reaction is N-propanoyltaurine + H2O = propanoate + taurine. It carries out the reaction N-acetyl-L-methionine + H2O = L-methionine + acetate. It catalyses the reaction N-acetyl-L-isoleucine + H2O = L-isoleucine + acetate. The enzyme catalyses N-acetyl-L-leucine + H2O = L-leucine + acetate. The catalysed reaction is N-acetyl-L-valine + H2O = L-valine + acetate. N-acetyltaurine hydrolase that catalyzes the hydrolysis of N-acetyltaurine into taurine and acetate. PTER also acts on other N-acetyl amino acids (Met, Ile, Leu, Val) and N-propionyltaurine, but at lower rates. This chain is N-acetyltaurine hydrolase (pter), found in Salmo salar (Atlantic salmon).